We begin with the raw amino-acid sequence, 153 residues long: Coiled-coil-helix-coiled-coil-helix domain-containing protein 2 (153 aa).

Disordered regions lie at residues 1-51 and 78-106; these read MPRG…AAPR and HAIT…QGAQ. Over residues 14–51 the composition is skewed to low complexity; sequence PPASRAPQMRAAPRRAPAAQPPAAAAPSAVGSPAAAPR. The CHCH domain occupies 113–153; that stretch reads FGPCSLEIKQFLECAQNQSDVKLCEGFNEVLRQCRIANGLM. Short sequence motifs (cx9C motif) lie at residues 116 to 126 and 136 to 146; these read CSLEIKQFLEC and CEGFNEVLRQC. 2 disulfide bridges follow: C116–C146 and C126–C136.

In terms of assembly, interacts with RBPJ.

Its subcellular location is the nucleus. It is found in the mitochondrion. It localises to the mitochondrion intermembrane space. Its function is as follows. Transcription factor. Binds to the oxygen responsive element of COX4I2 and activates its transcription under hypoxia conditions (4% oxygen), as well as normoxia conditions (20% oxygen). The polypeptide is Coiled-coil-helix-coiled-coil-helix domain-containing protein 2 (Chchd2) (Mus musculus (Mouse)).